We begin with the raw amino-acid sequence, 196 residues long: ATP-dependent Clp protease proteolytic subunit (196 aa).

S96 functions as the Nucleophile in the catalytic mechanism. H121 is an active-site residue.

It belongs to the peptidase S14 family. In terms of assembly, fourteen ClpP subunits assemble into 2 heptameric rings which stack back to back to give a disk-like structure with a central cavity, resembling the structure of eukaryotic proteasomes.

Its subcellular location is the cytoplasm. It carries out the reaction Hydrolysis of proteins to small peptides in the presence of ATP and magnesium. alpha-casein is the usual test substrate. In the absence of ATP, only oligopeptides shorter than five residues are hydrolyzed (such as succinyl-Leu-Tyr-|-NHMec, and Leu-Tyr-Leu-|-Tyr-Trp, in which cleavage of the -Tyr-|-Leu- and -Tyr-|-Trp bonds also occurs).. Its function is as follows. Cleaves peptides in various proteins in a process that requires ATP hydrolysis. Has a chymotrypsin-like activity. Plays a major role in the degradation of misfolded proteins. This is ATP-dependent Clp protease proteolytic subunit from Streptococcus salivarius.